The chain runs to 109 residues: ATPase inhibitor mai-2, mitochondrial (109 aa).

Disordered stretches follow at residues 17–39 (RFST…SIRD) and 73–95 (QEVD…HQKR). Residues 21–35 (GGHGDGAGRGGGSGG) are compositionally biased toward gly residues. The stretch at 45–109 (GKMEAAREDE…EAEERALGKE (65 aa)) forms a coiled coil.

This sequence belongs to the ATPase inhibitor family.

It localises to the mitochondrion. Its function is as follows. Thought to be a regulatory component of the ATP-synthesizing complex in the mitochondria. This Caenorhabditis briggsae protein is ATPase inhibitor mai-2, mitochondrial.